A 1047-amino-acid chain; its full sequence is Atrial natriuretic peptide receptor 2 (1047 aa).

The N-terminal stretch at 1 to 16 (MALPSLLLVVAALAGG) is a signal peptide. Residues 17-458 (VRPPGARNLT…DKTPLSTLAI (442 aa)) lie on the Extracellular side of the membrane. N-linked (GlcNAc...) asparagine glycosylation is found at N24 and N35. C75 and C101 are disulfide-bonded. 5 N-linked (GlcNAc...) asparagine glycosylation sites follow: N161, N195, N244, N277, and N349. The helical transmembrane segment at 459–478 (VALGTGITFIMFGVSSFLIF) threads the bilayer. Residues 479 to 1047 (RKLMLEKELA…GERKGPPGLL (569 aa)) lie on the Cytoplasmic side of the membrane. The residue at position 513 (S513) is a Phosphoserine. Positions 513–786 (SRLTLSLRGS…PDFGQIKGFI (274 aa)) constitute a Protein kinase domain. The residue at position 516 (T516) is a Phosphothreonine. A phosphoserine mark is found at S518, S522, S523, and S526. T529 carries the phosphothreonine modification. A Guanylate cyclase domain is found at 861–991 (TIYFSDIVGF…DTVNTASRME (131 aa)).

It belongs to the adenylyl cyclase class-4/guanylyl cyclase family. Phosphorylated. Phosphorylation of the protein kinase-like domain is required for full activation by CNP. In terms of processing, glycosylated.

It is found in the cell membrane. It catalyses the reaction GTP = 3',5'-cyclic GMP + diphosphate. In terms of biological role, receptor for the C-type natriuretic peptide NPPC/CNP hormone. Has guanylate cyclase activity upon binding of its ligand. May play a role in the regulation of skeletal growth. The chain is Atrial natriuretic peptide receptor 2 (Npr2) from Rattus norvegicus (Rat).